Here is a 164-residue protein sequence, read N- to C-terminus: Type II secretion system protein M (164 aa).

Topologically, residues 1-17 (MNELRQRWQAMSQRERQ) are cytoplasmic. The chain crosses the membrane as a helical span at residues 18 to 38 (LMVVCAAVLLLCVVYYAILQP). Residues 39–164 (WQEREDLWER…RLMLERTDEA (126 aa)) lie on the Periplasmic side of the membrane.

The protein belongs to the GSP M family. As to quaternary structure, type II secretion system is composed of four main components: the outer membrane complex, the inner membrane complex, the cytoplasmic secretion ATPase and the periplasm-spanning pseudopilus. Forms homodimers. Interacts with OutL/GspL. Interacts with OutE/GspE and OutF/GspF.

It localises to the cell inner membrane. Its function is as follows. Inner membrane component of the type II secretion system required for the energy-dependent secretion of extracellular factors such as proteases and toxins from the periplasm. Plays a role in the complex assembly and recruits OutL resulting in a stable complex in the inner membrane. Provides thus a link between the energy-providing OutE protein in the cytoplasm and the rest of the T2SS machinery. The sequence is that of Type II secretion system protein M (outM) from Pectobacterium carotovorum subsp. carotovorum (Erwinia carotovora subsp. carotovora).